Here is a 43-residue protein sequence, read N- to C-terminus: Protein PsbN (43 aa).

Residues 7-27 (LVVAIAAITICITAFAIYTAF) traverse the membrane as a helical segment.

The protein belongs to the PsbN family.

It is found in the cellular thylakoid membrane. May play a role in photosystem I and II biogenesis. The sequence is that of Protein PsbN from Synechococcus sp. (strain JA-3-3Ab) (Cyanobacteria bacterium Yellowstone A-Prime).